Consider the following 1156-residue polypeptide: Protein hu-li tai shao (1156 aa).

The disordered stretch occupies residues M1–E36. Positions N22–E36 are enriched in basic and acidic residues. A Phosphoserine modification is found at S478. Residues T480 and T498 each carry the phosphothreonine modification. Residue S603 is modified to Phosphoserine. Y608 is modified (phosphotyrosine). Residues T609 and T611 each carry the phosphothreonine modification. At S614 the chain carries Phosphoserine. The residue at position 627 (Y627) is a Phosphotyrosine. S630 is modified (phosphoserine). Positions F897–I956 are disordered. The segment covering L904 to F929 has biased composition (basic and acidic residues).

The protein belongs to the aldolase class II family. Adducin subfamily. Isoform C is expressed in nurse cells. Isoform A is produced in the nurse cell but transported into the oocyte at stage 1, localizes to the oocyte cortex at stage 8 and to the anterior pole from day 9 onwards. Isoform B is expressed in the somatic follicle cells that surround the germline.

The protein resides in the cytoplasm. The protein localises to the cytoskeleton. It localises to the cell membrane. Functionally, required for assembling actin at ring canals in developing egg chambers. Probably interacts with other developmental proteins involved in nurse cell/oocyte transport through the ring canals. Important for normal neuromotor function. The polypeptide is Protein hu-li tai shao (hts) (Drosophila melanogaster (Fruit fly)).